The following is a 390-amino-acid chain: S-adenosylmethionine synthase 3 (390 aa).

Residue Glu-9 participates in Mg(2+) binding. An ATP-binding site is contributed by His-15. Glu-43 lines the K(+) pocket. The L-methionine site is built by Glu-56 and Gln-99. ATP contacts are provided by residues 167–169 (DGK), 235–238 (SGRF), Asp-246, 252–253 (RK), Ala-269, Lys-273, and Lys-277. Residue Asp-246 participates in L-methionine binding. Lys-277 serves as a coordination point for L-methionine.

This sequence belongs to the AdoMet synthase family. In terms of assembly, homotetramer. Mn(2+) serves as cofactor. It depends on Mg(2+) as a cofactor. The cofactor is Co(2+). K(+) is required as a cofactor. Requires NH4(+) as cofactor. In terms of tissue distribution, mostly expressed in roots, and, to a lower extent, in hypocotyls and cotyledons.

It is found in the cytoplasm. The catalysed reaction is L-methionine + ATP + H2O = S-adenosyl-L-methionine + phosphate + diphosphate. It functions in the pathway amino-acid biosynthesis; S-adenosyl-L-methionine biosynthesis; S-adenosyl-L-methionine from L-methionine: step 1/1. Inhibited by products of SAMS reaction (SAM, Pi, PPi), substrate analogs (cycloleucine and ethionine), and alternative nucleotides (GTP, CTP and ADP). Strongly repressed by PPPi. In terms of biological role, catalyzes the formation of S-adenosylmethionine from methionine and ATP. The reaction comprises two steps that are both catalyzed by the same enzyme: formation of S-adenosylmethionine (AdoMet) and triphosphate, and subsequent hydrolysis of the triphosphate. The sequence is that of S-adenosylmethionine synthase 3 (SAMS3) from Catharanthus roseus (Madagascar periwinkle).